Reading from the N-terminus, the 1482-residue chain is Cystic fibrosis transmembrane conductance regulator (1482 aa).

The Cytoplasmic portion of the chain corresponds to 1–77; it reads MQKSPLERAS…KLINALRRCF (77 aa). A helical transmembrane segment spans residues 78–98; that stretch reads FWRFVFYGILLYLGEVTKAVQ. Positions 81-365 constitute an ABC transmembrane type-1 1 domain; sequence FVFYGILLYL…WAVQTWYDSL (285 aa). Residues 99 to 122 are Extracellular-facing; the sequence is PLLLGRIIASYDPDNKVERSIAIY. Residues 123–146 form a helical membrane-spanning segment; it reads LAIGLCLLFIVRTLLLHPAIFGLH. Residues 147 to 195 lie on the Cytoplasmic side of the membrane; that stretch reads HMGMQMRIAMFSLIYKKTLKLSSRVLDKISIGQLVSLLSNNLNKFDEGL. The chain crosses the membrane as a helical span at residues 196–216; the sequence is ALAHFVWIAPLQVTLLMGLIW. Residues 217–222 are Extracellular-facing; sequence DLLQAS. A helical membrane pass occupies residues 223 to 243; that stretch reads AFCGLAFLIIVALGQAGLGRM. The Cytoplasmic segment spans residues 244-298; it reads MMKYRDKRAGKINERLVITSEMIENIQSVKAYCWEEAMEKMIENLRQIELRLTRK. A helical membrane pass occupies residues 299–319; sequence AAYVRYFNSAAFFFSGFFVVF. At 320 to 339 the chain is on the extracellular side; that stretch reads LSVLPYAMLKGIILRKIFTT. The chain crosses the membrane as a helical span at residues 340–358; the sequence is ISFCIVLRMAVTRQFPWAV. Residues 359 to 858 lie on the Cytoplasmic side of the membrane; it reads QTWYDSLGAI…YLRYVTVHKS (500 aa). Residues Trp401, Ser434, 458-465, and Gln493 each bind ATP; that span reads GSTGAGKT. An ABC transporter 1 domain is found at 423 to 646; sequence NGDNSLFFSN…RPDFSSELMG (224 aa). A lipid anchor (S-palmitoyl cysteine) is attached at Cys524. Ser549 and Ser660 each carry phosphoserine. A disordered R region region spans residues 654-831; that stretch reads SAERRNSILT…EEINEEDLKE (178 aa). Ser670 is modified (phosphoserine; by PKA). Ser685 is modified (phosphoserine). Residue Lys687 forms a Glycyl lysine isopeptide (Lys-Gly) (interchain with G-Cter in ubiquitin) linkage. Phosphoserine occurs at positions 699 and 711. A Phosphothreonine modification is found at Thr716. A phosphoserine mark is found at Ser736, Ser767, Ser790, Ser795, and Ser813. Residues 859 to 879 form a helical membrane-spanning segment; it reads LIFVLIWCLVVFLAEVAVSLV. Positions 859–1156 constitute an ABC transmembrane type-1 2 domain; sequence LIFVLIWCLV…AVNSSIDVDS (298 aa). The Extracellular segment spans residues 880–919; it reads VLYLLRTSSLQDKGNNTTVNANSSYGVIVTNTSSYYLLYI. 4 N-linked (GlcNAc...) asparagine glycosylation sites follow: Asn894, Asn895, Asn901, and Asn910. The chain crosses the membrane as a discontinuously helical span at residues 920-940; that stretch reads YVGIADSLFALAIFRGLPLVH. The Cytoplasmic portion of the chain corresponds to 941-991; sequence TLIKVSKTLHHKMLRSILQAPMSTFNTLKAGRILNRFSKDIAILDDLLPLT. Residues 992–1012 traverse the membrane as a helical segment; sequence MFDFIQLLLIVIGAVVVVSVL. Residues 1013–1014 lie on the Extracellular side of the membrane; that stretch reads QP. The chain crosses the membrane as a helical span at residues 1015 to 1035; that stretch reads YIFLATVPVIAAFIILRAYFL. At 1036-1096 the chain is on the cytoplasmic side; it reads HTSQQLKQLE…TANWFLYLST (61 aa). Residues 1097–1117 traverse the membrane as a helical segment; the sequence is LRWFQMRIEIIFVIFFIAVTF. Residues 1118–1131 lie on the Extracellular side of the membrane; that stretch reads VSILTTGEGEGTIG. The helical transmembrane segment at 1132–1152 threads the bilayer; sequence IILTLAMNIMNTLQWAVNSSI. Topologically, residues 1153–1482 are cytoplasmic; the sequence is DVDSLMRSVS…TEEEVQETRL (330 aa). Residues 1212-1445 enclose the ABC transporter 2 domain; the sequence is MTVKDLTAKY…KSLFRQAISP (234 aa). ATP is bound by residues Tyr1221 and 1246–1253; that span reads GRTGSGKS. The segment at 1388–1482 is interaction with GORASP2; it reads RTLKQAFADC…TEEEVQETRL (95 aa). A lipid anchor (S-palmitoyl cysteine) is attached at Cys1397. Basic residues predominate over residues 1454–1463; that stretch reads HRNSSRHRSR. The segment at 1454-1482 is disordered; that stretch reads HRNSSRHRSRSQIAALKEETEEEVQETRL. Ser1458 is subject to Phosphoserine. The span at 1472–1482 shows a compositional bias: acidic residues; sequence ETEEEVQETRL. The PDZ-binding motif lies at 1480–1482; the sequence is TRL.

Belongs to the ABC transporter superfamily. ABCC family. CFTR transporter (TC 3.A.1.202) subfamily. Monomer; does not require oligomerization for channel activity. May form oligomers in the membrane. Interacts with SLC26A3, SLC26A6 and NHERF1. Interacts with SHANK2. Interacts with MYO6. Interacts (via C-terminus) with GOPC (via PDZ domain); this promotes CFTR internalization and thereby decreases channel activity. Interacts with SLC4A7 through NHERF1. Found in a complex with MYO5B and RAB11A. Interacts with ANO1. Interacts with SLC26A8. Interacts with AHCYL1; the interaction increases CFTR activity. Interacts with CSE1L. The core-glycosylated form interacts with GORASP2 (via PDZ GRASP-type 1 domain) in respone to ER stress. Interacts with MARCHF2; the interaction leads to CFTR ubiqtuitination and degradation. Interacts with ADGRG2. N-glycosylated. In terms of processing, phosphorylated; cAMP treatment promotes phosphorylation and activates the channel. Dephosphorylation decreases the ATPase activity (in vitro). Phosphorylation at PKA sites activates the channel. Phosphorylation at PKC sites enhances the response to phosphorylation by PKA. Phosphorylated by AMPK; this inhibits channel activity. Post-translationally, ubiquitinated, leading to its degradation in the lysosome. Deubiquitination by USP10 in early endosomes enhances its endocytic recycling to the cell membrane. Ubiquitinated by RNF185 during ER stress. Ubiquitinated by MARCHF2.

It is found in the apical cell membrane. The protein localises to the early endosome membrane. Its subcellular location is the cell membrane. The protein resides in the recycling endosome membrane. It localises to the endoplasmic reticulum membrane. It is found in the nucleus. It catalyses the reaction ATP + H2O + closed Cl(-) channel = ADP + phosphate + open Cl(-) channel.. It carries out the reaction chloride(in) = chloride(out). The catalysed reaction is hydrogencarbonate(in) = hydrogencarbonate(out). The enzyme catalyses ATP + H2O = ADP + phosphate + H(+). Epithelial ion channel that plays an important role in the regulation of epithelial ion and water transport and fluid homeostasis. Mediates the transport of chloride ions across the cell membrane. Possesses an intrinsic ATPase activity and utilizes ATP to gate its channel; the passive flow of anions through the channel is gated by cycles of ATP binding and hydrolysis by the ATP-binding domains. The ion channel is also permeable to HCO(3)(-); selectivity depends on the extracellular chloride concentration. Exerts its function also by modulating the activity of other ion channels and transporters. Contributes to the regulation of the pH and the ion content of the epithelial fluid layer. Modulates the activity of the epithelial sodium channel (ENaC) complex, in part by regulating the cell surface expression of the ENaC complex. May regulate bicarbonate secretion and salvage in epithelial cells by regulating the transporter SLC4A7. Can inhibit the chloride channel activity of ANO1. Plays a role in the chloride and bicarbonate homeostasis during sperm epididymal maturation and capacitation. The chain is Cystic fibrosis transmembrane conductance regulator from Loxodonta africana (African elephant).